The chain runs to 482 residues: tRNA sulfurtransferase (482 aa).

Residues 61–165 (LAIRDALTRI…DDRLLLIKGR (105 aa)) form the THUMP domain. Residues 183–184 (LI), Lys-265, Gly-287, and Gln-296 each bind ATP. Cysteines 344 and 456 form a disulfide. A Rhodanese domain is found at 404 to 482 (FGPNDVILDI…GFNNVKVYRP (79 aa)). Cys-456 functions as the Cysteine persulfide intermediate in the catalytic mechanism.

The protein belongs to the ThiI family.

The protein resides in the cytoplasm. The catalysed reaction is [ThiI sulfur-carrier protein]-S-sulfanyl-L-cysteine + a uridine in tRNA + 2 reduced [2Fe-2S]-[ferredoxin] + ATP + H(+) = [ThiI sulfur-carrier protein]-L-cysteine + a 4-thiouridine in tRNA + 2 oxidized [2Fe-2S]-[ferredoxin] + AMP + diphosphate. The enzyme catalyses [ThiS sulfur-carrier protein]-C-terminal Gly-Gly-AMP + S-sulfanyl-L-cysteinyl-[cysteine desulfurase] + AH2 = [ThiS sulfur-carrier protein]-C-terminal-Gly-aminoethanethioate + L-cysteinyl-[cysteine desulfurase] + A + AMP + 2 H(+). It functions in the pathway cofactor biosynthesis; thiamine diphosphate biosynthesis. Its function is as follows. Catalyzes the ATP-dependent transfer of a sulfur to tRNA to produce 4-thiouridine in position 8 of tRNAs, which functions as a near-UV photosensor. Also catalyzes the transfer of sulfur to the sulfur carrier protein ThiS, forming ThiS-thiocarboxylate. This is a step in the synthesis of thiazole, in the thiamine biosynthesis pathway. The sulfur is donated as persulfide by IscS. The sequence is that of tRNA sulfurtransferase from Escherichia coli O127:H6 (strain E2348/69 / EPEC).